The primary structure comprises 183 residues: Ly6/PLAUR domain-containing protein 6B (183 aa).

The first 39 residues, 1-39 (MLYKSSDRPAHKVSMLLLCHALAIAVVQIVIFSESWAFA), serve as a signal peptide directing secretion. The UPAR/Ly6 domain maps to 60-151 (FKCFTCENAG…VELPTNHTNA (92 aa)). The interval 60–154 (FKCFTCENAG…PTNHTNAVFA (95 aa)) is sufficient for inhibiting alpha-7 nAChR currents. Intrachain disulfides connect cysteine 62–cysteine 90, cysteine 65–cysteine 74, cysteine 83–cysteine 109, cysteine 115–cysteine 134, cysteine 120–cysteine 131, and cysteine 135–cysteine 140. Residue serine 164 is the site of GPI-anchor amidated serine attachment. The propeptide at 165-183 (SAPTLYLPVLAWVFVLPLL) is removed in mature form.

It localises to the cell membrane. Functionally, likely acts as a modulator of nicotinic acetylcholine receptors (nAChRs) activity. In vitro acts on nAChRs in a subtype- and stoichiometry-dependent manner. Modulates specifically alpha-3(3):beta-4(2) nAChRs by enhancing the sensitivity to ACh, decreasing ACh-induced maximal current response and increasing the rate of desensitization to ACh; has no effect on alpha-7 homomeric nAChRs; modulates alpha-3(2):alpha-5:beta-4(2) nAChRs in the context of CHRNA5/alpha-5 variant Asn-398 but not its wild-type sequence. However, according to another report in vitro it can weakly inhibits alpha-7 nAChRs. This chain is Ly6/PLAUR domain-containing protein 6B (LYPD6B), found in Homo sapiens (Human).